A 113-amino-acid polypeptide reads, in one-letter code: Protein NATD1 (113 aa).

Residues 1-16 (MAQSPAAASPGAPEQG) show a composition bias toward low complexity. The interval 1-20 (MAQSPAAASPGAPEQGCPIR) is disordered. Residues 22–112 (EHDRRRRQFT…PLPQYLERLQ (91 aa)) enclose the N-acetyltransferase domain.

It belongs to the NATD1 family.

The sequence is that of Protein NATD1 (NATD1) from Bos taurus (Bovine).